The following is a 695-amino-acid chain: DUF724 domain-containing protein 3 (695 aa).

Positions 376-464 (ITVTPLKQQD…GTSDTIRVDD (89 aa)) are disordered. A compositionally biased stretch (basic and acidic residues) spans 384–402 (QDAETEGKKSPKKTPEPVK). Residues 434-459 (NQNSNLNETDETCNVSKAGVNGTSDT) show a composition bias toward polar residues. The DUF724 domain maps to 509-694 (PFTKNLPFWK…LEFITSVLAP (186 aa)). The stretch at 614 to 684 (VEERKCLEKR…TIDQEIANVE (71 aa)) forms a coiled coil.

In terms of assembly, homodimer.

May be involved in the polar growth of plant cells via transportation of RNAs. This Arabidopsis thaliana (Mouse-ear cress) protein is DUF724 domain-containing protein 3.